The primary structure comprises 2467 residues: Transcription factor TFIIIB component B'' homolog (2467 aa).

2 disordered regions span residues 1 to 145 and 159 to 243; these read MFRR…RYRI and LRKE…VDDG. An interaction with ZBTB43 region spans residues 1 to 301; that stretch reads MFRRARLSVK…TYSSFRKNYY (301 aa). Over residues 81–92 the composition is skewed to low complexity; the sequence is AAESSTLSSASS. The span at 99-118 shows a compositional bias: polar residues; that stretch reads SSTSSLVQPSGSAPSQSRPL. Composition is skewed to basic and acidic residues over residues 133-144 and 177-186; these read AKEKQPCSDRYR and RPPDRSKMTM. Residues 144–177 are a coiled coil; sequence RIYKARKLREMLKEELRKEKKQWKNKFSTNESQR. Acidic residues predominate over residues 231-242; the sequence is NDNEDVEEEVDD. In terms of domain architecture, Myb-like spans 297 to 347; sequence RKNYYSKPWSNKETDMFFLAISMVGTDFSMIGQLFPHRARIEIKNKFKREE. Residues 357-472 form a required for phosphorylation by CSNK2A1 region; the sequence is AFQEKRPFDF…QEKKRRRNQG (116 aa). Disordered regions lie at residues 380 to 513, 576 to 720, 748 to 844, 866 to 893, 971 to 1200, 1231 to 1270, 1318 to 1388, 1409 to 1448, 1527 to 1561, 1592 to 1706, 1902 to 1926, 1977 to 2014, 2058 to 2083, 2179 to 2206, 2260 to 2290, and 2304 to 2449; these read EEKR…ECNK, SADM…VKAA, PPQT…PATW, LTAT…NAEM, LQEN…SSKI, LGRH…VKPA, DSDQ…LVPI, LPVR…PELQ, KAKP…EDHL, IHSE…RASK, IVSK…LPTR, IQRE…QCVG, LDSG…SDVP, LVVQ…DLTS, GIFP…SGSL, and LPQS…EEVT. The stretch at 458 to 487 forms a coiled coil; sequence EQDQNQEKKRRRNQGEANKQEATNLLERVL. The segment covering 649–660 has biased composition (basic and acidic residues); the sequence is AAEKNHMEKETM. Residues 809-824 are compositionally biased toward basic residues; the sequence is RFQKPKPNTGRRRRRI. 6 stretches are compositionally biased toward basic and acidic residues: residues 873–884, 992–1002, 1009–1041, 1089–1098, 1112–1130, and 1150–1170; these read KDSESDVKDSGR, TGKDLAMKEST, TEER…RGEM, EGKELNLRET, EKTD…ERES, and DLGK…EEHS. Polar residues-rich tracts occupy residues 1180–1200, 1251–1265, 1318–1330, and 1364–1382; these read LSSS…SSKI, DTNL…QQPL, DSDQ…QHNV, and PPNS…NQEN. 3 stretches are compositionally biased toward basic and acidic residues: residues 1429 to 1448, 1536 to 1561, and 1592 to 1603; these read QIVE…PELQ, RRKD…EDHL, and IHSEESGSDRND. Polar residues-rich tracts occupy residues 1621-1642 and 1650-1665; these read EQPT…SSCP and YPKT…SSAS. Residues 1688–1697 show a composition bias toward basic residues; that stretch reads RGSKRIRGKT. Basic and acidic residues-rich tracts occupy residues 1902-1913, 1977-1996, and 2068-2078; these read IVSKEQSNRDAA, IQRE…DKSH, and AAKEALKETPK. Low complexity predominate over residues 2185-2199; the sequence is PSLSPSRSGSSEKPP. Polar residues-rich tracts occupy residues 2262 to 2273, 2319 to 2334, and 2414 to 2429; these read FPTSESTHATSK, PASN…SSSK, and TAGS…SSDQ.

Component of TFIIIB complex. The TFIIIB complex has two activities, alpha and beta. The TFIIIB-alpha and TFIIIB-beta activities are required for transcription of genes with TFIIIC-bound internal promoters and PSE transcription factor-bound external promoters, respectively. The TFIIIB-alpha activity complex is composed of TBP, BDP1, and a complex containing both BRF2 and at least four stably associated proteins; YY1 facilitates the formation of TFIIIB-alpha activity complex. The TFIIIB-beta activity complex is composed of TBP, BDP1, and BRF1. Interacts with BRF1; this interaction diminishes during mitosis resulting in the release of BDP1 from chromosomal templates. Component of TFIIIC complex. The TFIIIC complex has two activities, C1 and C2. The TFIIIC2 activity complex is only required for transcription of the 'classical' pol III genes whereas the TFIIIC1 activity complex is required for transcription of all pol III genes. The TFIIIC1 activity complex is composed at least of BDP1. Interacts with ZBTB43. Phosphorylated by CSNK2A1 during mitosis, resulting in its release from chromatin and suppression of polymerase III transcription. As to expression, expressed in the cochlea, particularly in the spiral ligament, the capillaries of the stria vascularis and the basilar membrane.

It is found in the nucleus. In terms of biological role, general activator of RNA polymerase III transcription. Requires for transcription from all three types of polymerase III promoters. Requires for transcription of genes with internal promoter elements and with promoter elements upstream of the initiation site. In Mus musculus (Mouse), this protein is Transcription factor TFIIIB component B'' homolog (Bdp1).